The following is an 85-amino-acid chain: Antibacterial factor-related peptide 2 (85 aa).

Residues 1 to 17 (MFVRSLFLALLLATIVA) form the signal peptide. The propeptide occupies 82–85 (IKRG).

Expressed in the pharynx (at protein level). Detected in pharyngeal neurons and secretory cells.

Its subcellular location is the secreted. In terms of biological role, exhibits antimicrobial activity against the Gram-positive bacteria B.subtilis IFO 3134, K.varians MAFF 118076 and S.aureus ATCC 6538P, the Gram-negative bacteria A.tumefaciens MAFF 1001, B.bacteriovorus MAFF 106101 and K.pneumoniae MAFF 519002, and the yeasts C.krusei MAFF 114085, K.thermotolerans MAFF 113848 and T.delbrueckii MAFF 113811. The polypeptide is Antibacterial factor-related peptide 2 (Caenorhabditis elegans).